A 236-amino-acid chain; its full sequence is Lectin CPL (236 aa).

2 residues coordinate Mn(2+): Glu8 and Asp10. Ca(2+) contacts are provided by Asp10, Tyr12, Asn14, and Asp19. Asn14 lines the a carbohydrate pocket. The Mn(2+) site is built by Asp19 and His24. A carbohydrate contacts are provided by residues 99 to 100 (VY), Asp207, and Arg227.

This sequence belongs to the leguminous lectin family. As to quaternary structure, homotetramer; dimer of dimers. Post-translationally, concanavalin A-like lectins of the Diocleinae subtribe undergo proteolytic processing referred to as circular permutation. The propeptide is split into an N-terminal and a C-terminal part, the gamma and beta chain, respectively. These are then religated in beta-gamma order to form the mature alpha chain. The beta and gamma chains can often be detected in cell extracts. Residues 1-118 of the mature chain, as displayed here, probably constitute the beta chain in the propeptide, residues 119-236 the gamma chain.

Functionally, D-mannose/D-glucose-binding lectin that also binds derivative alpha-methyl-D-mannppyranoside. Has hemagglutinating activity towards rabbit erythrocytes. The polypeptide is Lectin CPL (Bionia pedicellata (Camptosema pedicellatum)).